Reading from the N-terminus, the 92-residue chain is Small ribosomal subunit protein uS19c (92 aa).

Belongs to the universal ribosomal protein uS19 family.

The protein localises to the plastid. It is found in the chloroplast. In terms of biological role, protein S19 forms a complex with S13 that binds strongly to the 16S ribosomal RNA. The chain is Small ribosomal subunit protein uS19c from Staurastrum punctulatum (Green alga).